Here is a 638-residue protein sequence, read N- to C-terminus: Chaperone protein DnaK (638 aa).

Thr198 is subject to Phosphothreonine; by autocatalysis. Residues 602 to 638 (QAKSQAQGGEEAQAKDAGQSNDDVVDAEFEEVKDDKK) are disordered. Acidic residues predominate over residues 624–638 (DVVDAEFEEVKDDKK).

This sequence belongs to the heat shock protein 70 family.

Its function is as follows. Acts as a chaperone. This is Chaperone protein DnaK from Shewanella denitrificans (strain OS217 / ATCC BAA-1090 / DSM 15013).